A 356-amino-acid chain; its full sequence is MEVRYKPEELTKLPRSVEYKERTVYMINQRLLPREFKVEAFRTVESVAEAIKNMTVRGAPAIGAAAAFGLALYAETSKAKSKDEFMDGFYKAYETLKNTRPTAVNLFWALNRIKKLVEEHLEDPLDEIKSLIVNEAQKIADEDVEANLRMGHYGAEVLPEGNLLTHCNAGSLATVHLGTVGAVVRVMHKDGSLKLLWLDETRPVLQGARLSAWEYSYDGLNVKLIADNAAAFVMQQGLVDAIIVGADRIVANGDFANKIGTYMLAVLAREHGIPFFAVAPLSSIDMSLKSGKEIPIEERSPEEVLTCGGCRIAPDVPVYNPAFDVTPHKYVTGIITDKRVVWPPFKRNLKKLFGEQ.

Residues 57–59 (RGA), Arg100, and Gln206 each bind substrate. Catalysis depends on Asp247, which acts as the Proton donor. A substrate-binding site is contributed by 257–258 (NK).

This sequence belongs to the eIF-2B alpha/beta/delta subunits family. MtnA subfamily.

It carries out the reaction 5-(methylsulfanyl)-alpha-D-ribose 1-phosphate = 5-(methylsulfanyl)-D-ribulose 1-phosphate. In terms of biological role, catalyzes the interconversion of methylthioribose-1-phosphate (MTR-1-P) into methylthioribulose-1-phosphate (MTRu-1-P). This chain is Putative methylthioribose-1-phosphate isomerase (aIF-2BI), found in Pyrococcus abyssi (strain GE5 / Orsay).